A 548-amino-acid polypeptide reads, in one-letter code: MEVKQEVLRPVSNFKPSIWGDQFLVYDEKEEDATVAQLIECLKEEVRKEIMVALDDRNKHANLLKLVSDIQRLGISYCFKQEIEQALGHIYDVYGDEWEGGSLSIWFRLLRQQGFFVSCDIFKKYKNNDGTFKDSLTRNVEGMLELYEAAYLRVRGEVILDDALAFTKGQLEKITKDPLQWNCNLSLSKHIKEALERPIWKRLPRLEVVRYIPFYEQQDSHNESLLRLAKLEFNRLQSLHKRELSQLSKWWKDFEPTKNLHYVRDRLVELYFWVLGVYFEPQYSRSRIFLTKVIKIATVLDDTYDNYGVYDELEIFTDAIDRWSITCIDALPDYMKFIYKILLDTYGEMEEIMASEGKAYQVYYAKEALKELSRNYMIEAKWTNEGYEPTLKEHETVSFITAGYQMLTPSSFVGMGETVTEEPFKWALTFPPLIKSASVVSRIMDDIIGHKEEGKRKHVVSTVECYMKEHDVTEEYVYDLFKERVEDAWKDMNLELLTCENIPLALKMRTINLARVIESIYKYDDNLKNVGAEIQDNIKSCFIISMSI.

Residues arginine 264, aspartate 301, aspartate 305, arginine 442, and aspartate 445 each contribute to the (2E,6E)-farnesyl diphosphate site. The Mg(2+) site is built by aspartate 301 and aspartate 305. A DDXXD motif motif is present at residues 301-305 (DDTYD). Mg(2+)-binding residues include aspartate 445 and glutamate 453.

The protein belongs to the terpene synthase family. Tpsa subfamily. As to quaternary structure, monomer. Mg(2+) serves as cofactor. As to expression, expressed in leaves and stems.

The protein localises to the cytoplasm. The catalysed reaction is (2E,6E)-farnesyl diphosphate = germacrene D + diphosphate. It carries out the reaction (2E,6E)-farnesyl diphosphate = (-)-(E)-beta-caryophyllene + diphosphate. The enzyme catalyses (2E,6E)-farnesyl diphosphate = beta-copaene + diphosphate. Its pathway is secondary metabolite biosynthesis; terpenoid biosynthesis. In terms of biological role, sesquiterpene synthase involved in the biosynthesis of volatile compounds. Mediates the conversion of (2E,6E)-farnesyl diphosphate (FPP) into germacrene D, (-)-(E)-beta-caryophyllene and beta-copaene. The chain is Sesquiterpene synthase TPS1 from Xanthium strumarium (Rough cocklebur).